Consider the following 438-residue polypeptide: Putative pectate lyase 14 (438 aa).

Positions 1-26 (MVVARTLFSISATLIIFLALFLHVNA) are cleaved as a signal peptide. Residues asparagine 40, asparagine 46, and asparagine 73 are each glycosylated (N-linked (GlcNAc...) asparagine). The Ca(2+) site is built by aspartate 236, aspartate 260, and aspartate 264. The active site involves arginine 316.

Belongs to the polysaccharide lyase 1 family. The cofactor is Ca(2+).

It carries out the reaction Eliminative cleavage of (1-&gt;4)-alpha-D-galacturonan to give oligosaccharides with 4-deoxy-alpha-D-galact-4-enuronosyl groups at their non-reducing ends.. Its pathway is glycan metabolism; pectin degradation; 2-dehydro-3-deoxy-D-gluconate from pectin: step 2/5. This chain is Putative pectate lyase 14, found in Arabidopsis thaliana (Mouse-ear cress).